The chain runs to 824 residues: uncharacterized protein (824 aa).

This is an uncharacterized protein from Caenorhabditis elegans.